The primary structure comprises 393 residues: MTTRTSGYVREEFVAPPEHTFTLPDSTIVRSIEQDGTVEVFLAQSSAPIAIFSPHARTLRVSPHGIVNDDRAVSSPAPCFTTAEPALSTEDAWAALYALWMRRTEKDVLPLVLDSRTESLKPYLVQTGLAFSPPDAQSEFELLVVRAAFWQGAGAPVNRHWLQNMVPDPSTSIAPFPAITSFTRTEHVLTTHPLRPPKPAPGAVIYSRYIHTVNQQLTLTHIDANNLEHFAAYSRWQNSERVNIGWRERGPDEKHRKYLADRLADLHSMGVIIAWDGQLAGYGEVCWVKEDPMGTYVGGLGDYDQGIHILIGEEKFRGRHRFTAVMTSLYHACFLREPRTEVVVSEPRADLPIVPRLIAYLPQELNREFELPHKRAVYTVVRRERFFQAAMLY.

Belongs to the lysine N-acyltransferase mbtK family.

It participates in siderophore biosynthesis; ferrichrome biosynthesis. L-ornithine N(5)-monooxygenase; part of the siderophore biosynthetic pathway. Omphalotus olearius produces ferrichrome A, but no other siderophore has been detected. Ferrichrome A consists of a hexapeptide ring made up of one glycine, two serine, and three N(5)-hydroxyornithine amino acid residues, the latter acylated by trans-(alpha-methyl)-glutaconic acid residues. The biosynthesis of ferrichrome A depends on the hydroxylation of ornithine to N(5)-hydroxyornithine, catalyzed by the monooxygenase omo1. The second step, the acylation of N(5)-hydroxy-L-ornithine is probably catalyzed by the N-acyltransferase ato1. Finally, assembly of ferrichrome A is catalyzed by the nonribosomal peptide synthase (NRPS) fso1. This chain is Acyltransferase ato1, found in Omphalotus olearius (Jack o'lantern).